Here is a 376-residue protein sequence, read N- to C-terminus: Small ribosomal subunit protein uS11m (376 aa).

The protein belongs to the universal ribosomal protein uS11 family. In terms of assembly, component of the mitochondrial small ribosomal subunit (mt-SSU). Mature N.crassa 74S mitochondrial ribosomes consist of a small (37S) and a large (54S) subunit. The 37S small subunit contains a 16S ribosomal RNA (16S mt-rRNA) and 32 different proteins. The 54S large subunit contains a 23S rRNA (23S mt-rRNA) and 42 different proteins.

The protein localises to the mitochondrion. Its function is as follows. Component of the mitochondrial ribosome (mitoribosome), a dedicated translation machinery responsible for the synthesis of mitochondrial genome-encoded proteins, including at least some of the essential transmembrane subunits of the mitochondrial respiratory chain. The mitoribosomes are attached to the mitochondrial inner membrane and translation products are cotranslationally integrated into the membrane. This chain is Small ribosomal subunit protein uS11m (mrps18), found in Neurospora crassa (strain ATCC 24698 / 74-OR23-1A / CBS 708.71 / DSM 1257 / FGSC 987).